A 459-amino-acid polypeptide reads, in one-letter code: Phosphomethylpyrimidine synthase (459 aa).

Substrate contacts are provided by residues Asn-80, Met-109, Tyr-139, His-175, 195–197, 236–239, and Glu-275; these read SRG and DSLR. A Zn(2+)-binding site is contributed by His-279. Tyr-302 contributes to the substrate binding site. His-343 contacts Zn(2+). Residues Cys-423, Cys-426, and Cys-431 each coordinate [4Fe-4S] cluster.

The protein belongs to the ThiC family. Requires [4Fe-4S] cluster as cofactor.

It carries out the reaction 5-amino-1-(5-phospho-beta-D-ribosyl)imidazole + S-adenosyl-L-methionine = 4-amino-2-methyl-5-(phosphooxymethyl)pyrimidine + CO + 5'-deoxyadenosine + formate + L-methionine + 3 H(+). Its pathway is cofactor biosynthesis; thiamine diphosphate biosynthesis. Functionally, catalyzes the synthesis of the hydroxymethylpyrimidine phosphate (HMP-P) moiety of thiamine from aminoimidazole ribotide (AIR) in a radical S-adenosyl-L-methionine (SAM)-dependent reaction. This chain is Phosphomethylpyrimidine synthase, found in Prochlorococcus marinus (strain MIT 9211).